Reading from the N-terminus, the 230-residue chain is Thymidylate kinase (230 aa).

20–27 contacts ATP; sequence GGEGAGKS.

Belongs to the thymidylate kinase family.

The catalysed reaction is dTMP + ATP = dTDP + ADP. Its function is as follows. Phosphorylation of dTMP to form dTDP in both de novo and salvage pathways of dTTP synthesis. This Rhodopseudomonas palustris (strain BisB18) protein is Thymidylate kinase.